The primary structure comprises 473 residues: Allene oxide synthase CYP74A2 (473 aa).

3 residues coordinate heme b: Lys-88, His-119, and Lys-123. Residues Ser-199 and Lys-282 each contribute to the (13S)-hydroperoxy-(9Z,11E)-octadecadienoate site. The heme b site is built by Lys-424 and Cys-426.

Belongs to the cytochrome P450 family. The cofactor is heme b.

It catalyses the reaction (13S)-hydroperoxy-(9Z,11E,15Z)-octadecatrienoate = (9Z,13S,15Z)-12,13-epoxyoctadeca-9,11,15-trienoate + H2O. It carries out the reaction (13S)-hydroperoxy-(9Z,11E)-octadecadienoate = (9Z,13S)-12,13-epoxyoctadeca-9,11-dienoate + H2O. It functions in the pathway lipid metabolism; oxylipin biosynthesis. Functionally, cytochrome P450 enzyme involved in the biosynthesis of oxylipin jasmonates, important phytohormones acting as growth regulators and signaling molecules for plant defense. Functions as an allene oxide synthase that converts hydroperoxy fatty acids to unstable allene epoxides. Catalyzes the dehydration of 13-HPOTE ((13S)-hydroperoxy-(9Z,11E,15Z)-octadecatrienoate). Also catalyzes the dehydration of 13-HPODE ((13S)-hydroperoxy-(9Z,11E)-octadecadienoate). This is Allene oxide synthase CYP74A2 from Parthenium argentatum (Guayule rubber plant).